A 250-amino-acid polypeptide reads, in one-letter code: UPF0736 protein YjbA (250 aa).

The protein belongs to the UPF0736 family.

The protein is UPF0736 protein YjbA (yjbA) of Bacillus subtilis (strain 168).